We begin with the raw amino-acid sequence, 1034 residues long: Glycine dehydrogenase (decarboxylating), mitochondrial (1034 aa).

Residues 1–63 constitute a mitochondrion transit peptide; it reads MERARRLAML…LNGFGSQVRT (63 aa). Lysine 770 carries the post-translational modification N6-(pyridoxal phosphate)lysine.

It belongs to the GcvP family. Homodimer. The glycine cleavage system is composed of four proteins: P, T, L and H. It depends on pyridoxal 5'-phosphate as a cofactor.

It is found in the mitochondrion. It catalyses the reaction N(6)-[(R)-lipoyl]-L-lysyl-[glycine-cleavage complex H protein] + glycine + H(+) = N(6)-[(R)-S(8)-aminomethyldihydrolipoyl]-L-lysyl-[glycine-cleavage complex H protein] + CO2. Its function is as follows. The glycine cleavage system catalyzes the degradation of glycine. The P protein binds the alpha-amino group of glycine through its pyridoxal phosphate cofactor; CO(2) is released and the remaining methylamine moiety is then transferred to the lipoamide cofactor of the H protein. This is Glycine dehydrogenase (decarboxylating), mitochondrial (GDCSPA) from Flaveria trinervia (Clustered yellowtops).